The primary structure comprises 210 residues: Putative 3-methyladenine DNA glycosylase (210 aa).

The tract at residues 180 to 210 (SRPPPGAAAARAARAPAAPAPRPRRPRGSGP) is disordered. The segment covering 186–196 (AAAARAARAPA) has biased composition (low complexity). Residues 201 to 210 (RPRRPRGSGP) are compositionally biased toward basic residues.

The protein belongs to the DNA glycosylase MPG family.

The polypeptide is Putative 3-methyladenine DNA glycosylase (Anaeromyxobacter dehalogenans (strain 2CP-1 / ATCC BAA-258)).